A 381-amino-acid polypeptide reads, in one-letter code: Queuine tRNA-ribosyltransferase (381 aa).

The active-site Proton acceptor is the D96. Substrate contacts are provided by residues 96–100 (DSGGF), D150, Q193, and G220. The segment at 251 to 257 (GVGSPDS) is RNA binding. The active-site Nucleophile is D270. The interval 275–279 (TRIAR) is RNA binding; important for wobble base 34 recognition. 4 residues coordinate Zn(2+): C308, C310, C313, and H339.

It belongs to the queuine tRNA-ribosyltransferase family. As to quaternary structure, homodimer. Within each dimer, one monomer is responsible for RNA recognition and catalysis, while the other monomer binds to the replacement base PreQ1. It depends on Zn(2+) as a cofactor.

The catalysed reaction is 7-aminomethyl-7-carbaguanine + guanosine(34) in tRNA = 7-aminomethyl-7-carbaguanosine(34) in tRNA + guanine. It functions in the pathway tRNA modification; tRNA-queuosine biosynthesis. Its function is as follows. Catalyzes the base-exchange of a guanine (G) residue with the queuine precursor 7-aminomethyl-7-deazaguanine (PreQ1) at position 34 (anticodon wobble position) in tRNAs with GU(N) anticodons (tRNA-Asp, -Asn, -His and -Tyr). Catalysis occurs through a double-displacement mechanism. The nucleophile active site attacks the C1' of nucleotide 34 to detach the guanine base from the RNA, forming a covalent enzyme-RNA intermediate. The proton acceptor active site deprotonates the incoming PreQ1, allowing a nucleophilic attack on the C1' of the ribose to form the product. After dissociation, two additional enzymatic reactions on the tRNA convert PreQ1 to queuine (Q), resulting in the hypermodified nucleoside queuosine (7-(((4,5-cis-dihydroxy-2-cyclopenten-1-yl)amino)methyl)-7-deazaguanosine). In Bacillus licheniformis (strain ATCC 14580 / DSM 13 / JCM 2505 / CCUG 7422 / NBRC 12200 / NCIMB 9375 / NCTC 10341 / NRRL NRS-1264 / Gibson 46), this protein is Queuine tRNA-ribosyltransferase.